A 319-amino-acid polypeptide reads, in one-letter code: Beta-ketoacyl-[acyl-carrier-protein] synthase III (319 aa).

Catalysis depends on residues Cys113 and His246. Residues 247–251 are ACP-binding; that stretch reads QANLR. Residue Asn276 is part of the active site.

Belongs to the thiolase-like superfamily. FabH family. As to quaternary structure, homodimer.

Its subcellular location is the cytoplasm. The enzyme catalyses malonyl-[ACP] + acetyl-CoA + H(+) = 3-oxobutanoyl-[ACP] + CO2 + CoA. It participates in lipid metabolism; fatty acid biosynthesis. Functionally, catalyzes the condensation reaction of fatty acid synthesis by the addition to an acyl acceptor of two carbons from malonyl-ACP. Catalyzes the first condensation reaction which initiates fatty acid synthesis and may therefore play a role in governing the total rate of fatty acid production. Possesses both acetoacetyl-ACP synthase and acetyl transacylase activities. Its substrate specificity determines the biosynthesis of branched-chain and/or straight-chain of fatty acids. The polypeptide is Beta-ketoacyl-[acyl-carrier-protein] synthase III (Chromobacterium violaceum (strain ATCC 12472 / DSM 30191 / JCM 1249 / CCUG 213 / NBRC 12614 / NCIMB 9131 / NCTC 9757 / MK)).